Consider the following 521-residue polypeptide: Probable feruloyl esterase B (521 aa).

Residues 1–17 (MKVSSLLSVALPGAALA) form the signal peptide. Intrachain disulfides connect Cys26/Cys72 and Cys61/Cys111. Residues Asn37, Asn51, Asn77, Asn95, Asn144, and Asn177 are each glycosylated (N-linked (GlcNAc...) asparagine). Cystine bridges form between Cys184–Cys438, Cys253–Cys270, and Cys279–Cys288. Ser185 (acyl-ester intermediate) is an active-site residue. The Ca(2+) site is built by Asp254, Asp257, Ala259, Asp261, and Ile263. Asn284, Asn347, Asn352, and Asn378 each carry an N-linked (GlcNAc...) asparagine glycan. Residues Asp397 and His437 each act as charge relay system in the active site. N-linked (GlcNAc...) asparagine glycosylation is found at Asn488 and Asn511. A disulfide bridge connects residues Cys498 and Cys520.

This sequence belongs to the tannase family.

Its subcellular location is the secreted. It carries out the reaction feruloyl-polysaccharide + H2O = ferulate + polysaccharide.. Its function is as follows. Involved in degradation of plant cell walls. Hydrolyzes the feruloyl-arabinose ester bond in arabinoxylans as well as the feruloyl-galactose and feruloyl-arabinose ester bonds in pectin. The protein is Probable feruloyl esterase B (faeB) of Aspergillus niger (strain ATCC MYA-4892 / CBS 513.88 / FGSC A1513).